Consider the following 895-residue polypeptide: Zinc finger protein 574 (895 aa).

3 consecutive C2H2-type zinc fingers follow at residues 16–38 (YVCS…QNSH), 76–98 (YQCL…QELH), and 126–148 (YECV…RQTH). Position 164 is a phosphoserine (Ser-164). The C2H2-type 4 zinc finger occupies 214–236 (YKCSECSQLFQLPADFLEHQATH). The interval 239–301 (APVPESQEPA…RARRNNSGEA (63 aa)) is disordered. The segment covering 247–257 (PALQQEVQASS) has biased composition (polar residues). The segment covering 274–287 (HSYELRNGEAIGRD) has biased composition (basic and acidic residues). The residue at position 298 (Ser-298) is a Phosphoserine. 4 consecutive C2H2-type zinc fingers follow at residues 309-331 (LFCS…LRSH), 336-358 (FKCP…LGDH), 364-386 (FLCV…RRAH), and 392-413 (HSCP…RRTH). A disordered region spans residues 434–460 (FPEPAPAETGEPEAPEPPVSEETSAGP). 6 C2H2-type zinc fingers span residues 466-489 (YRCL…RFVH), 495-517 (HKCS…LRTH), 523-545 (FPCP…RLTH), 551-573 (YRCG…RLVH), 579-601 (YRCQ…RYHH), and 607-630 (YKCR…LVVH). The segment at 636–659 (HRCPSCGAAFPSSLRLREHRCAAA) adopts a C2H2-type 15; degenerate zinc-finger fold. The C2H2-type 16 zinc-finger motif lies at 667 to 689 (FECGTCGKKVGSAARLQAHEAAH). A disordered region spans residues 687 to 732 (AAHAAAGPGEVLAKEPPAPRAPRATRAPVASPAALGGTATASPAPA). The span at 707–731 (APRATRAPVASPAALGGTATASPAP) shows a compositional bias: low complexity. Ser-717 bears the Phosphoserine mark. Residue Thr-724 is modified to Phosphothreonine. Ser-728 is subject to Phosphoserine. C2H2-type zinc fingers lie at residues 737–759 (LECS…RRIH), 765–787 (YPCP…RRLH), 793–815 (FACE…RRIH), and 821–843 (YSCP…RKTH). Residue Arg-831 is modified to Asymmetric dimethylarginine.

Belongs to the krueppel C2H2-type zinc-finger protein family.

It localises to the nucleus. In terms of biological role, may be involved in transcriptional regulation. The chain is Zinc finger protein 574 (ZNF574) from Pongo abelii (Sumatran orangutan).